A 115-amino-acid polypeptide reads, in one-letter code: uncharacterized protein (115 aa).

A signal peptide spans 1–26 (MNFKKTVVSALSISALALSVSGVASA). In terms of domain architecture, BIG2 spans 36-114 (VKNISISPTH…AVFGKVYVTV (79 aa)).

This is an uncharacterized protein from Bacillus subtilis (strain 168).